We begin with the raw amino-acid sequence, 713 residues long: tRNA 5-methylaminomethyl-2-thiouridine biosynthesis bifunctional protein MnmC (713 aa).

The segment at Met1–Pro300 is tRNA (mnm(5)s(2)U34)-methyltransferase. An FAD-dependent cmnm(5)s(2)U34 oxidoreductase region spans residues Ile306–Leu713.

It in the N-terminal section; belongs to the methyltransferase superfamily. tRNA (mnm(5)s(2)U34)-methyltransferase family. This sequence in the C-terminal section; belongs to the DAO family. FAD is required as a cofactor.

Its subcellular location is the cytoplasm. The catalysed reaction is 5-aminomethyl-2-thiouridine(34) in tRNA + S-adenosyl-L-methionine = 5-methylaminomethyl-2-thiouridine(34) in tRNA + S-adenosyl-L-homocysteine + H(+). Functionally, catalyzes the last two steps in the biosynthesis of 5-methylaminomethyl-2-thiouridine (mnm(5)s(2)U) at the wobble position (U34) in tRNA. Catalyzes the FAD-dependent demodification of cmnm(5)s(2)U34 to nm(5)s(2)U34, followed by the transfer of a methyl group from S-adenosyl-L-methionine to nm(5)s(2)U34, to form mnm(5)s(2)U34. This chain is tRNA 5-methylaminomethyl-2-thiouridine biosynthesis bifunctional protein MnmC, found in Shewanella baltica (strain OS155 / ATCC BAA-1091).